We begin with the raw amino-acid sequence, 578 residues long: Membrane protein insertase YidC (578 aa).

Residues I3–W23 form a helical membrane-spanning segment. The interval A34–D72 is disordered. Residues A37–A66 are compositionally biased toward polar residues. 5 consecutive transmembrane segments (helical) span residues L361 to L381, L387 to F407, L457 to L477, P500 to P520, and P535 to V555.

This sequence belongs to the OXA1/ALB3/YidC family. Type 1 subfamily. In terms of assembly, interacts with the Sec translocase complex via SecD. Specifically interacts with transmembrane segments of nascent integral membrane proteins during membrane integration.

It is found in the cell inner membrane. Functionally, required for the insertion and/or proper folding and/or complex formation of integral membrane proteins into the membrane. Involved in integration of membrane proteins that insert both dependently and independently of the Sec translocase complex, as well as at least some lipoproteins. Aids folding of multispanning membrane proteins. The chain is Membrane protein insertase YidC from Pseudomonas aeruginosa (strain ATCC 15692 / DSM 22644 / CIP 104116 / JCM 14847 / LMG 12228 / 1C / PRS 101 / PAO1).